A 131-amino-acid polypeptide reads, in one-letter code: Inner membrane protein YecN (131 aa).

The Cytoplasmic segment spans residues 1 to 107 (MVSALYAVLS…RWRRSGMSAT (107 aa)). The chain crosses the membrane as a helical span at residues 108–128 (WCALLLMVLANLWYMPWELVF). Over 129 to 131 (SLR) the chain is Periplasmic.

Its subcellular location is the cell inner membrane. This chain is Inner membrane protein YecN (yecN), found in Escherichia coli O6:H1 (strain CFT073 / ATCC 700928 / UPEC).